The following is a 672-amino-acid chain: Peptidoglycan D,D-transpeptidase MrdA (672 aa).

The helical transmembrane segment at 21-41 (IFFAVGLVIICLLVLASRYAY) threads the bilayer. Catalysis depends on serine 326, which acts as the Acyl-ester intermediate. Zn(2+) is bound by residues aspartate 350, aspartate 365, histidine 371, and cysteine 384. Residues 616 to 672 (ANHQVNGGLMTAGIKPGELPSGNESASSTPATSAPTSAAASTPQATPTRPATNEVDE) form a disordered region. The span at 640 to 672 (SASSTPATSAPTSAAASTPQATPTRPATNEVDE) shows a compositional bias: low complexity.

Belongs to the transpeptidase family. MrdA subfamily. As to quaternary structure, monomer. Zn(2+) serves as cofactor.

The protein resides in the cell inner membrane. The catalysed reaction is Preferential cleavage: (Ac)2-L-Lys-D-Ala-|-D-Ala. Also transpeptidation of peptidyl-alanyl moieties that are N-acyl substituents of D-alanine.. The protein operates within cell wall biogenesis; peptidoglycan biosynthesis. Its activity is regulated as follows. Inhibited by the beta-lactams sulbactam and piperacillin-tazobactam. Its function is as follows. Catalyzes cross-linking of the peptidoglycan cell wall. Involved in the determination of the rod shape of the cell. The sequence is that of Peptidoglycan D,D-transpeptidase MrdA from Acinetobacter baumannii (strain ATCC 19606 / DSM 30007 / JCM 6841 / CCUG 19606 / CIP 70.34 / NBRC 109757 / NCIMB 12457 / NCTC 12156 / 81).